We begin with the raw amino-acid sequence, 898 residues long: Methionine--tRNA ligase, cytoplasmic (898 aa).

The region spanning 74–198 is the GST C-terminal domain; the sequence is GWEQDDLTNQ…VLKQQGVLAL (125 aa). The 'HIGH' region signature appears at 273–283; it reads PYVNNVPHLGN. Residues 593-597 carry the 'KMSKS' region motif; the sequence is KFSKS. Lys596 is a binding site for ATP. Position 825 is a phosphoserine (Ser825). Position 833 is a phosphothreonine (Thr833). One can recognise a WHEP-TRS domain in the interval 839 to 895; that stretch reads QIQALTEEVTKQGNIVRELKAQKADKNQIAAEVAKLLDLKKQLALAEGKPLETSKGK.

It belongs to the class-I aminoacyl-tRNA synthetase family. As to quaternary structure, monomer. Part of a multisubunit complex that groups tRNA ligases for Arg (RARS1), Asp (DARS1), Gln (QARS1), Ile (IARS1), Leu (LARS1), Lys (KARS1), Met (MARS1) the bifunctional ligase for Glu and Pro (EPRS1) and the auxiliary subunits AIMP1/p43, AIMP2/p38 and EEF1E1/p18. Forms a linear complex that contains MARS1, EEF1E1, EPRS1 and AIMP2 that is at the core of the multisubunit complex.

Its subcellular location is the cytoplasm. It is found in the cytosol. The protein localises to the nucleus. It localises to the nucleolus. The enzyme catalyses tRNA(Met) + L-methionine + ATP = L-methionyl-tRNA(Met) + AMP + diphosphate. Catalyzes the specific attachment of an amino acid to its cognate tRNA in a 2 step reaction: the amino acid (AA) is first activated by ATP to form AA-AMP and then transferred to the acceptor end of the tRNA. Plays a role in the synthesis of ribosomal RNA in the nucleolus. This Bos taurus (Bovine) protein is Methionine--tRNA ligase, cytoplasmic (MARS1).